The following is an 872-amino-acid chain: Alanine--tRNA ligase (872 aa).

Zn(2+) is bound by residues H567, H571, C669, and H673.

Belongs to the class-II aminoacyl-tRNA synthetase family. Zn(2+) is required as a cofactor.

The protein localises to the cytoplasm. It carries out the reaction tRNA(Ala) + L-alanine + ATP = L-alanyl-tRNA(Ala) + AMP + diphosphate. In terms of biological role, catalyzes the attachment of alanine to tRNA(Ala) in a two-step reaction: alanine is first activated by ATP to form Ala-AMP and then transferred to the acceptor end of tRNA(Ala). Also edits incorrectly charged Ser-tRNA(Ala) and Gly-tRNA(Ala) via its editing domain. In Streptococcus pneumoniae (strain Hungary19A-6), this protein is Alanine--tRNA ligase.